The following is an 853-amino-acid chain: DNA mismatch repair protein MutS (853 aa).

614–621 (GPNMGGKS) contacts ATP.

This sequence belongs to the DNA mismatch repair MutS family.

Its function is as follows. This protein is involved in the repair of mismatches in DNA. It is possible that it carries out the mismatch recognition step. This protein has a weak ATPase activity. The protein is DNA mismatch repair protein MutS of Shigella boydii serotype 18 (strain CDC 3083-94 / BS512).